The chain runs to 123 residues: Beta-2-microglobulin (123 aa).

The N-terminal stretch at 1–21 (MSRLFLFALLGHLCFLPYLDA) is a signal peptide. An Ig-like C1-type domain is found at 29-118 (PRVQVYSRYP…STLNEPKVVK (90 aa)). A disulfide bond links C49 and C104.

The protein belongs to the beta-2-microglobulin family. As to quaternary structure, heterodimer of an alpha chain and a beta chain. Beta-2-microglobulin is the beta-chain of major histocompatibility complex class I molecules.

It localises to the secreted. Its function is as follows. Component of the class I major histocompatibility complex (MHC). Involved in the presentation of peptide antigens to the immune system. The polypeptide is Beta-2-microglobulin (B2M) (Monodelphis domestica (Gray short-tailed opossum)).